Reading from the N-terminus, the 571-residue chain is Proline--tRNA ligase (571 aa).

Belongs to the class-II aminoacyl-tRNA synthetase family. ProS type 1 subfamily. In terms of assembly, homodimer.

Its subcellular location is the cytoplasm. The enzyme catalyses tRNA(Pro) + L-proline + ATP = L-prolyl-tRNA(Pro) + AMP + diphosphate. In terms of biological role, catalyzes the attachment of proline to tRNA(Pro) in a two-step reaction: proline is first activated by ATP to form Pro-AMP and then transferred to the acceptor end of tRNA(Pro). As ProRS can inadvertently accommodate and process non-cognate amino acids such as alanine and cysteine, to avoid such errors it has two additional distinct editing activities against alanine. One activity is designated as 'pretransfer' editing and involves the tRNA(Pro)-independent hydrolysis of activated Ala-AMP. The other activity is designated 'posttransfer' editing and involves deacylation of mischarged Ala-tRNA(Pro). The misacylated Cys-tRNA(Pro) is not edited by ProRS. The sequence is that of Proline--tRNA ligase from Pseudomonas syringae pv. tomato (strain ATCC BAA-871 / DC3000).